A 172-amino-acid polypeptide reads, in one-letter code: Probable calcium-binding protein CML28 (172 aa).

4 EF-hand domains span residues 1–36 (MDST…FGIF), 37–72 (IPDD…ILGD), 95–130 (DEDE…LGLK), and 133–168 (RTAD…GGFA). Residues aspartate 14, asparagine 16, aspartate 18, arginine 20, glutamate 25, aspartate 50, asparagine 52, aspartate 54, cysteine 56, glutamate 61, aspartate 108, asparagine 110, aspartate 112, glutamate 119, aspartate 146, aspartate 148, aspartate 150, arginine 152, and glutamate 157 each coordinate Ca(2+).

In terms of biological role, potential calcium sensor. This is Probable calcium-binding protein CML28 (CML28) from Oryza sativa subsp. japonica (Rice).